The chain runs to 417 residues: Serine hydroxymethyltransferase (417 aa).

(6S)-5,6,7,8-tetrahydrofolate is bound by residues leucine 121 and 125–127; that span reads GHL. Lysine 229 is subject to N6-(pyridoxal phosphate)lysine. 355-357 lines the (6S)-5,6,7,8-tetrahydrofolate pocket; it reads SPF.

This sequence belongs to the SHMT family. As to quaternary structure, homodimer. Pyridoxal 5'-phosphate is required as a cofactor.

The protein localises to the cytoplasm. The enzyme catalyses (6R)-5,10-methylene-5,6,7,8-tetrahydrofolate + glycine + H2O = (6S)-5,6,7,8-tetrahydrofolate + L-serine. It participates in one-carbon metabolism; tetrahydrofolate interconversion. Its pathway is amino-acid biosynthesis; glycine biosynthesis; glycine from L-serine: step 1/1. Functionally, catalyzes the reversible interconversion of serine and glycine with tetrahydrofolate (THF) serving as the one-carbon carrier. This reaction serves as the major source of one-carbon groups required for the biosynthesis of purines, thymidylate, methionine, and other important biomolecules. Also exhibits THF-independent aldolase activity toward beta-hydroxyamino acids, producing glycine and aldehydes, via a retro-aldol mechanism. This is Serine hydroxymethyltransferase from Xanthomonas oryzae pv. oryzae (strain MAFF 311018).